An 855-amino-acid chain; its full sequence is Inactive rhomboid protein 1 (855 aa).

The segment at 1–36 is disordered; that stretch reads MSEARRDSTSSLQRKKPPWLKLDIPSAAPPAAEEPS. Residues 1 to 411 are Cytoplasmic-facing; the sequence is MSEARRDSTS…HRPFFTYWLT (411 aa). Low complexity predominate over residues 25 to 36; it reads PSAAPPAAEEPS. S76 and S176 each carry phosphoserine. 2 positions are modified to phosphothreonine: T180 and T183. A Phosphoserine modification is found at S390. Residues 412–432 form a helical membrane-spanning segment; that stretch reads FVHSLVTVLAVCIYGIAPVGF. The Lumenal segment spans residues 433–655; that stretch reads SQHETVDSVL…NPEVPDQFYR (223 aa). N583 is a glycosylation site (N-linked (GlcNAc...) asparagine). A helical membrane pass occupies residues 656–676; the sequence is LWLSLFLHAGILHCLVSICFQ. The Cytoplasmic segment spans residues 677 to 691; it reads MTVLRDLEKLAGWHR. The chain crosses the membrane as a helical span at residues 692-712; that stretch reads IAIIYLLSGVTGNLASAIFLP. Over 713-714 the chain is Lumenal; the sequence is YR. A helical membrane pass occupies residues 715 to 735; it reads AEVGPAGSQFGILACLFVELF. The Cytoplasmic portion of the chain corresponds to 736 to 746; sequence QSWQILARPWR. The chain crosses the membrane as a helical span at residues 747 to 767; the sequence is AFFKLLAVVLFLFTFGLLPWI. Topologically, residues 768–772 are lumenal; it reads DNFAH. A helical membrane pass occupies residues 773 to 793; it reads ISGFISGLFLSFAFLPYISFG. Residues 794–803 are Cytoplasmic-facing; sequence KFDLYRKRCQ. The helical transmembrane segment at 804–824 threads the bilayer; that stretch reads IIVFQVVFLGLLAGLVVLFYF. The Lumenal portion of the chain corresponds to 825 to 855; the sequence is YPVRCEWCEFLTCIPFTDKFCEKYELDAQLH.

This sequence belongs to the peptidase S54 family. In terms of assembly, homodimer, or homooligomer. Interacts with TGFA and HBEGF. Interacts with EGF; may retain EGF in the endoplasmic reticulum and regulates its degradation through the endoplasmic reticulum-associated degradation (ERAD). Interacts (via cytoplasmic N-terminus) with FRMD8/iTAP; this interaction leads to mutual protein stabilization. Interacts with ADAM17/TACE.

It is found in the endoplasmic reticulum membrane. The protein resides in the golgi apparatus membrane. Its function is as follows. Regulates ADAM17 protease, a sheddase of the epidermal growth factor (EGF) receptor ligands and TNF, thereby plays a role in sleep, cell survival, proliferation, migration and inflammation. Does not exhibit any protease activity on its own. The protein is Inactive rhomboid protein 1 (RHBDF1) of Plecturocebus moloch (Dusky titi monkey).